Reading from the N-terminus, the 176-residue chain is R-phycoerythrin beta chain (176 aa).

Residues Cys-50 and Cys-61 each coordinate phycourobilin. Residue Asn-72 is modified to N4-methylasparagine. The (2R,3E)-phycoerythrobilin site is built by Cys-82 and Cys-158.

The protein belongs to the phycobiliprotein family. Heterodimer of an alpha and a beta chain. Post-translationally, contains two covalently linked phycoerythrobilin chromophores and one covalently linked phycourobilin chromophore.

It is found in the plastid. It localises to the chloroplast thylakoid membrane. Functionally, light-harvesting photosynthetic bile pigment-protein from the phycobiliprotein complex. The sequence is that of R-phycoerythrin beta chain (cpeB) from Aglaothamnion neglectum (Red alga).